The sequence spans 272 residues: Universal stress protein MT2699 (272 aa).

ATP-binding positions include G15, 109 to 115 (GSVGIGR), and 123 to 124 (ST).

This sequence belongs to the universal stress protein A family.

The chain is Universal stress protein MT2699 from Mycobacterium tuberculosis (strain CDC 1551 / Oshkosh).